The sequence spans 250 residues: Type-1Ab cytolytic delta-endotoxin (250 aa).

It belongs to the cyt1/cyt2 endotoxin family. Post-translationally, active after proteolytic processing.

Functionally, kills the larvae of dipteran insects by making pores in the epithelial cell membrane of the insect midgut. The chain is Type-1Ab cytolytic delta-endotoxin (cyt1Ab1) from Bacillus thuringiensis subsp. medellin.